The sequence spans 584 residues: Interferon regulatory factor 2-binding protein 1 (584 aa).

Residues 59-120 (HVLPEGRSPG…RYDRATSSSR (62 aa)) are disordered. Ser-66 bears the Phosphoserine mark. Positions 82–100 (STGSQGSQLPPPQAQAQPS) are enriched in low complexity. The residue at position 125 (Ser-125) is a Phosphoserine. At Arg-177 the chain carries Omega-N-methylarginine. Ser-186 is modified (phosphoserine). Positions 197-217 (EKEKQQRNADCLAELNEAMRG) form a coiled coil. A Glycyl lysine isopeptide (Lys-Gly) (interchain with G-Cter in SUMO2) cross-link involves residue Lys-227. Disordered regions lie at residues 346–421 (PAEA…GVPS) and 433–495 (LGHS…GTGA). Pro residues predominate over residues 354 to 369 (YPEPAPAALCGPPPRA). Ser-371, Ser-384, Ser-421, and Ser-436 each carry phosphoserine. Lys-438 participates in a covalent cross-link: Glycyl lysine isopeptide (Lys-Gly) (interchain with G-Cter in SUMO2). Over residues 449–458 (AGGASPAASS) the composition is skewed to low complexity. Phosphoserine is present on residues Ser-453 and Ser-457. The RING-type; degenerate zinc finger occupies 503–550 (CTLCRERLEDTHFVQCPSVPGHKFCFPCSREFIKAQGPAGEVYCPSGD). The interval 503–550 (CTLCRERLEDTHFVQCPSVPGHKFCFPCSREFIKAQGPAGEVYCPSGD) is cys-rich.

Belongs to the IRF2BP family. As to quaternary structure, interacts with IRF2. Part of a corepressor complex containing IRF2 and IRF2BP2. Interacts with JDP2.

It is found in the nucleus. It carries out the reaction S-ubiquitinyl-[E2 ubiquitin-conjugating enzyme]-L-cysteine + [acceptor protein]-L-lysine = [E2 ubiquitin-conjugating enzyme]-L-cysteine + N(6)-ubiquitinyl-[acceptor protein]-L-lysine.. Functionally, acts as a transcriptional corepressor in a IRF2-dependent manner; this repression is not mediated by histone deacetylase activities. May act as an E3 ligase towards JDP2, enhancing its polyubiquitination. Represses ATF2-dependent transcriptional activation. This is Interferon regulatory factor 2-binding protein 1 (Irf2bp1) from Mus musculus (Mouse).